The sequence spans 305 residues: MEKLFIAAGLFVGLVCLVKCMRFSQHLFLRFCKALPSSFLRSMGQWAVITGAGDGIGKAYSFELARHGLNVVLISRTLEKLQTIAEEIERTTGSCVKIVQADFTREDIYDHIKEHLEGLEIGILVNNVGMLPSFFPSHFLSTSGESQNLIHCNITSVVKMTQLVLKHMESRRKGLILNISSGAALRPWPLYSLYSASKAFVYTFSKALSVEYRDKGIIIQVLTPYSISTPMTKYLNNKMTKTADEFVKESLKYVTIGAESCGCLAHEIIAIILNRIPSRIFYSSTAQRFLLTRYSDYLKRNISNR.

44–73 (GQWAVITGAGDGIGKAYSFELARHGLNVVL) is an NADP(+) binding site. A substrate-binding site is contributed by Ser181. Tyr194 functions as the Proton acceptor in the catalytic mechanism.

It belongs to the short-chain dehydrogenases/reductases (SDR) family. 17-beta-HSD 3 subfamily. As to expression, expressed in the testes.

Its subcellular location is the endoplasmic reticulum. It carries out the reaction a 17beta-hydroxy steroid + NADP(+) = a 17-oxo steroid + NADPH + H(+). It catalyses the reaction testosterone + NADP(+) = androst-4-ene-3,17-dione + NADPH + H(+). The enzyme catalyses 17beta-estradiol + NADP(+) = estrone + NADPH + H(+). The catalysed reaction is 3beta-hydroxyandrost-5-en-17-one + NADPH + H(+) = androst-5-en-3beta,17beta-diol + NADP(+). It carries out the reaction 17beta-hydroxy-5alpha-androstan-3-one + NADP(+) = 5alpha-androstan-3,17-dione + NADPH + H(+). It catalyses the reaction androsterone + NADPH + H(+) = 5alpha-androstane-3alpha,17beta-diol + NADP(+). The enzyme catalyses 3beta-hydroxy-5alpha-androstan-17-one + NADPH + H(+) = 5alpha-androstane-3beta,17beta-diol + NADP(+). The catalysed reaction is androst-4-ene-3,11,17-trione + NADPH + H(+) = 17beta-hydroxyandrost-4-ene-3,11-dione + NADP(+). It carries out the reaction 11beta-hydroxyandrost-4-ene-3,17-dione + NADPH + H(+) = 11beta,17beta-dihydroxyandrost-4-ene-3-one + NADP(+). It functions in the pathway hormone biosynthesis; testosterone biosynthesis. Its pathway is steroid metabolism. Functionally, catalyzes the conversion of 17-oxosteroids to 17beta-hydroxysteroids. Favors the reduction of androstenedione to testosterone. Testosterone is the key androgen driving male development and function. Uses NADPH while the two other EDH17B enzymes use NADH. Androgens such as epiandrosterone, dehydroepiandrosterone, androsterone and androstanedione are accepted as substrates and reduced at C-17. Can reduce 11-ketoandrostenedione as well as 11beta-hydroxyandrostenedione at C-17 to the respective testosterone forms. Plays a role in the rate-limiting-step for the maximum level of testosterone production by the testis but does not affect basal testosterone production. In Mus musculus (Mouse), this protein is 17-beta-hydroxysteroid dehydrogenase type 3.